Reading from the N-terminus, the 234-residue chain is Urease accessory protein UreG 1 (234 aa).

The disordered stretch occupies residues 1–29; the sequence is MTRTPTGVPMHLGHTHDAPAAVSADATRP. Position 42–49 (42–49) interacts with GTP; that stretch reads GPVGSGKT.

Belongs to the SIMIBI class G3E GTPase family. UreG subfamily. Homodimer. UreD, UreF and UreG form a complex that acts as a GTP-hydrolysis-dependent molecular chaperone, activating the urease apoprotein by helping to assemble the nickel containing metallocenter of UreC. The UreE protein probably delivers the nickel.

Its subcellular location is the cytoplasm. Facilitates the functional incorporation of the urease nickel metallocenter. This process requires GTP hydrolysis, probably effectuated by UreG. The sequence is that of Urease accessory protein UreG 1 from Streptomyces griseus subsp. griseus (strain JCM 4626 / CBS 651.72 / NBRC 13350 / KCC S-0626 / ISP 5235).